A 76-amino-acid chain; its full sequence is MSVSTKRLEMDEEAEEAFDLFDVTHKGYIDFEDLRRSCAQLGENLTKEQLQLMLDLAGTNGKVSREEFAELWIHIS.

2 consecutive EF-hand domains span residues 9–44 and 43–76; these read EMDE…LGEN and ENLT…IHIS.

The protein localises to the cytoplasm. It is found in the nucleus. This is an uncharacterized protein from Schizosaccharomyces pombe (strain 972 / ATCC 24843) (Fission yeast).